The primary structure comprises 70 residues: ATP synthase subunit c (70 aa).

2 helical membrane-spanning segments follow: residues 4-24 and 47-67; these read IATA…NGLI and FIGI…GFLL.

The protein belongs to the ATPase C chain family. F-type ATPases have 2 components, F(1) - the catalytic core - and F(0) - the membrane proton channel. F(1) has five subunits: alpha(3), beta(3), gamma(1), delta(1), epsilon(1). F(0) has three main subunits: a(1), b(2) and c(10-14). The alpha and beta chains form an alternating ring which encloses part of the gamma chain. F(1) is attached to F(0) by a central stalk formed by the gamma and epsilon chains, while a peripheral stalk is formed by the delta and b chains.

The protein resides in the cell membrane. Functionally, f(1)F(0) ATP synthase produces ATP from ADP in the presence of a proton or sodium gradient. F-type ATPases consist of two structural domains, F(1) containing the extramembraneous catalytic core and F(0) containing the membrane proton channel, linked together by a central stalk and a peripheral stalk. During catalysis, ATP synthesis in the catalytic domain of F(1) is coupled via a rotary mechanism of the central stalk subunits to proton translocation. Key component of the F(0) channel; it plays a direct role in translocation across the membrane. A homomeric c-ring of between 10-14 subunits forms the central stalk rotor element with the F(1) delta and epsilon subunits. This Exiguobacterium sibiricum (strain DSM 17290 / CCUG 55495 / CIP 109462 / JCM 13490 / 255-15) protein is ATP synthase subunit c.